The following is a 203-amino-acid chain: Ribosomal RNA small subunit methyltransferase G (203 aa).

S-adenosyl-L-methionine-binding positions include glycine 73, leucine 78, 124–125 (VE), and arginine 139.

The protein belongs to the methyltransferase superfamily. RNA methyltransferase RsmG family.

Its subcellular location is the cytoplasm. The enzyme catalyses guanosine(527) in 16S rRNA + S-adenosyl-L-methionine = N(7)-methylguanosine(527) in 16S rRNA + S-adenosyl-L-homocysteine. Specifically methylates the N7 position of guanine in position 527 of 16S rRNA. The sequence is that of Ribosomal RNA small subunit methyltransferase G from Haemophilus influenzae (strain 86-028NP).